A 201-amino-acid chain; its full sequence is Retinol-binding protein 4 (201 aa).

A signal peptide spans 1–18 (MEWVWALVLLAALGGGSA). 3 disulfide bridges follow: Cys22–Cys178, Cys88–Cys192, and Cys138–Cys147. Gln116 serves as a coordination point for substrate. The residue at position 139 (Arg139) is an Omega-N-methylarginine.

This sequence belongs to the calycin superfamily. Lipocalin family. Interacts with TTR. Interaction with TTR prevents its loss by filtration through the kidney glomeruli. Interacts with STRA6. In terms of tissue distribution, detected in blood plasma (at protein level).

The protein resides in the secreted. Functionally, retinol-binding protein that mediates retinol transport in blood plasma. Delivers retinol from the liver stores to the peripheral tissues. Transfers the bound all-trans retinol to STRA6, that then facilitates retinol transport across the cell membrane. This is Retinol-binding protein 4 (Rbp4) from Rattus norvegicus (Rat).